The following is a 1700-amino-acid chain: Rho guanine nucleotide exchange factor 28 (1700 aa).

Residues 288–343 form a disordered region; sequence TEKATMPSGAAETEEEVRNLESGRSPSEEEEDAKSIKSQVDGPSEHEDQDRLPLDR. A phosphoserine mark is found at serine 312 and serine 314. The segment covering 330–343 has biased composition (basic and acidic residues); sequence PSEHEDQDRLPLDR. At serine 478 the chain carries Phosphoserine. The interval 483-532 is disordered; it reads VADSEGEGGSEPPICYAVGSQSSPRTGLPSGDELDSFETNTEPDCNISRT. The residue at position 623 (serine 623) is a Phosphoserine. A Phorbol-ester/DAG-type zinc finger spans residues 651 to 698; that stretch reads RHQFVPGTFSGVLQCSGCDKTLLGKESLQCANCKANTHKGCKDAVPPC. Positions 846–1041 constitute a DH domain; sequence KRQDVIFELM…KDMIAAVDLK (196 aa). Residues 1095-1184 form the PH domain; that stretch reads ATGRFKDILA…NWMRRIQQAV (90 aa). 2 disordered regions span residues 1184 to 1205 and 1289 to 1328; these read VESCPEEEGGRTSESDEERRKA and KMGDVSQSSEESPGGTVLMDTPSTQDVPASPTASLVTEGT. Over residues 1191-1205 the composition is skewed to basic and acidic residues; sequence EGGRTSESDEERRKA. The tract at residues 1292–1301 is interaction with PTK2/FAK1; required for regulation of axonal branching and synapse formation; sequence DVSQSSEESP. Positions 1309 to 1325 are enriched in polar residues; the sequence is TPSTQDVPASPTASLVT. The interval 1369 to 1380 is mediates cytoplasmic retention and interaction with YWHAH; it reads IIQAIQNLTRLL. Residues 1421 to 1522 are a coiled coil; that stretch reads QEKSRYLEKQ…RERQKMRVQQ (102 aa). An interaction with microtubules region spans residues 1421 to 1700; sequence QEKSRYLEKQ…DGAEENILYL (280 aa). The segment at 1493 to 1524 is RNA-binding; that stretch reads QLQEYQQSLERLREGQRMVERERQKMRVQQGL. Serine 1535 is modified (phosphoserine). A mediates cytoplasmic retention and interaction with MAPK8IP1 region spans residues 1563–1576; sequence FINEAFGHMSLNTS. Residues 1602-1700 are disordered; the sequence is SESPTELKID…DGAEENILYL (99 aa). Phosphoserine is present on serine 1604. Over residues 1647 to 1663 the composition is skewed to low complexity; it reads DLDSFQSESSSPQDSNQ. The span at 1664–1675 shows a compositional bias: polar residues; the sequence is RGPQPQTLTTEA.

As to quaternary structure, homooligomer; forms some cytoplasmic aggregates. Forms a complex with MAPK8 and MAPK8IP1. Interacts with RHOA. Interacts with microtubules. Interacts with YWHAE and YWHAH. Interacts with PTK2/FAK1. Interacts with NEFL. Interacts with CTNND2; prevents interaction with RHOA. Phosphorylated on tyrosine upon stimulation of cells by laminin. As to expression, highly enriched in the brain (at protein level). Also detected in lung and kidney.

The protein localises to the cytoplasm. The protein resides in the cell membrane. In terms of biological role, functions as a RHOA-specific guanine nucleotide exchange factor regulating signaling pathways downstream of integrins and growth factor receptors. Functions in axonal branching, synapse formation and dendritic morphogenesis. Also functions in focal adhesion formation, cell motility and B-lymphocytes activation. May regulate NEFL expression and aggregation and play a role in apoptosis. This is Rho guanine nucleotide exchange factor 28 (Arhgef28) from Mus musculus (Mouse).